A 672-amino-acid polypeptide reads, in one-letter code: Acetoacetyl-CoA synthetase (672 aa).

It belongs to the ATP-dependent AMP-binding enzyme family. In terms of tissue distribution, abundant in male subcutaneous white adipose tissue after weaning. In white adipose tissue, it is preferentially detected in mature adipocytes but not in preadipocytes. The expression in primary preadipocytes increases during the adipocyte differentiation. In brain, it is expressed in the midbrain, pons/medulla, cerebral cortex, hippocampus and cerebellum. The expression in the cerebellum is restricted primarily to glial cells, while in the cerebral cortex, it is restricted to neuronal cells.

The protein localises to the cytoplasm. Its subcellular location is the cytosol. The enzyme catalyses acetoacetate + ATP + CoA = acetoacetyl-CoA + AMP + diphosphate. Converts acetoacetate to acetoacetyl-CoA in the cytosol. Ketone body-utilizing enzyme, responsible for the synthesis of cholesterol and fatty acids. The protein is Acetoacetyl-CoA synthetase (Aacs) of Rattus norvegicus (Rat).